The sequence spans 175 residues: Large ribosomal subunit protein uL18 (175 aa).

It belongs to the universal ribosomal protein uL18 family. Part of the 50S ribosomal subunit. Contacts the 5S and 23S rRNAs.

Its function is as follows. This is one of the proteins that bind and probably mediate the attachment of the 5S RNA into the large ribosomal subunit, where it forms part of the central protuberance. The protein is Large ribosomal subunit protein uL18 of Methanospirillum hungatei JF-1 (strain ATCC 27890 / DSM 864 / NBRC 100397 / JF-1).